We begin with the raw amino-acid sequence, 485 residues long: U4/U6 small nuclear ribonucleoprotein Prp31 homolog (485 aa).

Disordered regions lie at residues 1 to 36 (MATL…EEDV) and 329 to 361 (IEKW…RRLR). The segment covering 11-36 (DLDELSDNEAELDENDGDVGKEEEDV) has biased composition (acidic residues). Residues 216-334 (IAPNLSAIVG…IRKKIEKWQE (119 aa)) enclose the Nop domain. The span at 334–348 (EPPPARQPKPLPVPD) shows a compositional bias: pro residues. Basic residues predominate over residues 352 to 361 (KKRRGGRRLR). The short motif at 352-365 (KKRRGGRRLRKMKE) is the Nuclear localization signal element.

Belongs to the PRP31 family. As to quaternary structure, component of the U4/U6-U5 tri-snRNP complex composed of the U4, U6 and U5 snRNAs and pre-mRNA-splicing factors. Interacts with STA1 and SOP1.

The protein resides in the nucleus. It localises to the cajal body. Functionally, involved in pre-mRNA splicing. Required for the assembly of the U4/U5/U6 tri-snRNP complex, one of the building blocks of the spliceosome. Functions in association with STA1 and ZOP1 in spliceosome dynamics and pre-mRNA splicing. Required for transcriptional regulation and pre-mRNA splicing of cold-responsive genes, such as LTI78/RD29A, KIN2/COR6.6 or COR15A, especially under cold stress. May play a role in stress response. Involved in transcriptional gene silencing of endogenous transposable elements, independently of the RNA-directed DNA methylation (RdDM) pathway. Seems not to participate in the small RNA biogenesis of the RdDM pathway. This Arabidopsis thaliana (Mouse-ear cress) protein is U4/U6 small nuclear ribonucleoprotein Prp31 homolog.